The following is a 403-amino-acid chain: Na(+)/H(+) antiporter NhaA (403 aa).

Transmembrane regions (helical) follow at residues 25–45, 70–90, 105–125, 136–156, 165–185, 188–208, 213–233, 234–254, 269–289, 302–322, 340–360, and 369–389; these read IAGL…NSPF, LILW…GLEI, IALP…IFLA, GWAV…AMLG, VFLT…IALA, EGLS…LIVL, VASL…VLES, GVHS…RVSG, VALL…LGGV, IILG…GLAV, GAAL…GLAF, and VNLA…VVLA.

The protein belongs to the NhaA Na(+)/H(+) (TC 2.A.33) antiporter family.

Its subcellular location is the cell inner membrane. It carries out the reaction Na(+)(in) + 2 H(+)(out) = Na(+)(out) + 2 H(+)(in). In terms of biological role, na(+)/H(+) antiporter that extrudes sodium in exchange for external protons. The polypeptide is Na(+)/H(+) antiporter NhaA (Maricaulis maris (strain MCS10) (Caulobacter maris)).